A 184-amino-acid polypeptide reads, in one-letter code: Peptidyl-tRNA hydrolase (184 aa).

Y14 provides a ligand contact to tRNA. The active-site Proton acceptor is the H19. 2 residues coordinate tRNA: F60 and N62.

Belongs to the PTH family. Monomer.

It localises to the cytoplasm. It catalyses the reaction an N-acyl-L-alpha-aminoacyl-tRNA + H2O = an N-acyl-L-amino acid + a tRNA + H(+). In terms of biological role, hydrolyzes ribosome-free peptidyl-tRNAs (with 1 or more amino acids incorporated), which drop off the ribosome during protein synthesis, or as a result of ribosome stalling. Functionally, catalyzes the release of premature peptidyl moieties from peptidyl-tRNA molecules trapped in stalled 50S ribosomal subunits, and thus maintains levels of free tRNAs and 50S ribosomes. This Mesomycoplasma hyopneumoniae (strain 232) (Mycoplasma hyopneumoniae) protein is Peptidyl-tRNA hydrolase.